The sequence spans 255 residues: Ribosomal RNA small subunit methyltransferase A (255 aa).

Residues His-12, Leu-14, Gly-39, Glu-60, Asp-81, and Asn-103 each coordinate S-adenosyl-L-methionine.

Belongs to the class I-like SAM-binding methyltransferase superfamily. rRNA adenine N(6)-methyltransferase family. RsmA subfamily.

It is found in the cytoplasm. It carries out the reaction adenosine(1518)/adenosine(1519) in 16S rRNA + 4 S-adenosyl-L-methionine = N(6)-dimethyladenosine(1518)/N(6)-dimethyladenosine(1519) in 16S rRNA + 4 S-adenosyl-L-homocysteine + 4 H(+). Functionally, specifically dimethylates two adjacent adenosines (A1518 and A1519) in the loop of a conserved hairpin near the 3'-end of 16S rRNA in the 30S particle. May play a critical role in biogenesis of 30S subunits. The protein is Ribosomal RNA small subunit methyltransferase A of Variovorax paradoxus (strain S110).